Here is a 404-residue protein sequence, read N- to C-terminus: Cysteine desulfurase IscS (404 aa).

Residues 75-76 (AT), N155, Q183, and 203-205 (SAH) contribute to the pyridoxal 5'-phosphate site. K206 carries the post-translational modification N6-(pyridoxal phosphate)lysine. T243 serves as a coordination point for pyridoxal 5'-phosphate. C328 acts as the Cysteine persulfide intermediate in catalysis. [2Fe-2S] cluster is bound at residue C328.

Belongs to the class-V pyridoxal-phosphate-dependent aminotransferase family. NifS/IscS subfamily. In terms of assembly, homodimer. Forms a heterotetramer with IscU, interacts with other sulfur acceptors. The cofactor is pyridoxal 5'-phosphate.

The protein localises to the cytoplasm. The enzyme catalyses (sulfur carrier)-H + L-cysteine = (sulfur carrier)-SH + L-alanine. Its pathway is cofactor biosynthesis; iron-sulfur cluster biosynthesis. In terms of biological role, master enzyme that delivers sulfur to a number of partners involved in Fe-S cluster assembly, tRNA modification or cofactor biosynthesis. Catalyzes the removal of elemental sulfur atoms from cysteine to produce alanine. Functions as a sulfur delivery protein for Fe-S cluster synthesis onto IscU, an Fe-S scaffold assembly protein, as well as other S acceptor proteins. This Pseudomonas aeruginosa (strain UCBPP-PA14) protein is Cysteine desulfurase IscS.